The sequence spans 149 residues: Transthyretin (149 aa).

The signal sequence occupies residues 1 to 20 (MAFHSLLLLCLAGLLFVSEA). At cysteine 32 the chain carries Sulfocysteine. Lysine 37 lines the L-thyroxine pocket. Glutamate 64 carries the post-translational modification 4-carboxyglutamate. 2 residues coordinate L-thyroxine: glutamate 76 and serine 139.

It belongs to the transthyretin family. In terms of assembly, homotetramer. Dimer of dimers. In the homotetramer, subunits assemble around a central channel that can accommodate two ligand molecules. Interacts with RBP4. Post-translationally, sulfonation of the reactive cysteine Cys-32 enhances the stability of the native conformation of TTR, avoiding misassembly of the protein leading to amyloid formation. In terms of tissue distribution, detected in plasma (at protein level). Detected in liver.

It is found in the secreted. Functionally, thyroid hormone-binding protein. Probably transports thyroxine from the bloodstream to the brain. This Petaurus breviceps (Australian sugar glider) protein is Transthyretin (TTR).